The chain runs to 290 residues: Probable ATP-dependent kinase TDA10 (290 aa).

38-45 (GPQGSGKS) contacts ATP.

The protein belongs to the GLYK kinase family.

It localises to the cytoplasm. Its subcellular location is the nucleus. In terms of biological role, ATP-dependent kinase whose specificity is not yet known. This is Probable ATP-dependent kinase TDA10 (TDA10) from Saccharomyces cerevisiae (strain ATCC 204508 / S288c) (Baker's yeast).